A 405-amino-acid polypeptide reads, in one-letter code: Glucan 1,3-beta-glucosidase A (405 aa).

An N-terminal signal peptide occupies residues 1–14 (MLPLLLCIVPYCWS). Catalysis depends on E199, which acts as the Proton donor. Intrachain disulfides connect C280-C405 and C306-C332. The Nucleophile role is filled by E298.

Belongs to the glycosyl hydrolase 5 (cellulase A) family. Monomer. Mn(2+) is required as a cofactor.

It is found in the secreted. It carries out the reaction Successive hydrolysis of beta-D-glucose units from the non-reducing ends of (1-&gt;3)-beta-D-glucans, releasing alpha-glucose.. Its function is as follows. Beta-glucanases participate in the metabolism of beta-glucan, the main structural component of the cell wall. It could also function biosynthetically as a transglycosylase. The chain is Glucan 1,3-beta-glucosidase A (exgA) from Aspergillus oryzae (strain ATCC 42149 / RIB 40) (Yellow koji mold).